The sequence spans 1527 residues: Lysophospholipase nte1 (1527 aa).

The Cytoplasmic segment spans residues 1 to 73; that stretch reads MADSGASVPS…SPPTPTTMVG (73 aa). Residues 74–94 traverse the membrane as a helical segment; that stretch reads WIGWVFSLVFQTIPSVLYWVI. At 95–116 the chain is on the lumenal side; it reads TFSTITLPTWLFTLFSMSLTFT. The helical transmembrane segment at 117–137 threads the bilayer; that stretch reads MNFTTLLLIVLGLVSTVSWFI. The Cytoplasmic segment spans residues 138–1527; that stretch reads RYRFLNMYSR…RTLAPRRASI (1390 aa). Over residues 299-310 the composition is skewed to low complexity; it reads GSSSSMSSVQPS. Disordered stretches follow at residues 299 to 387, 567 to 596, and 765 to 785; these read GSSS…RRKS, DQFATTPRLHSPLTEKERSPLRRSSLQRKD, and ATSRGATAAAPINESKRKKPS. The span at 364–377 shows a compositional bias: polar residues; that stretch reads RASSYHPNGQSTAS. Residues 682-809 and 846-966 contribute to the a nucleoside 3',5'-cyclic phosphate site; these read GGTS…SYRS and RLTG…IAQR. Positions 1224–1388 constitute a PNPLA domain; it reads LVLGGGGARG…IDNLTVAHMK (165 aa). Positions 1228-1233 match the GXGXXG motif; that stretch reads GGGARG. The GXSXG signature appears at 1255–1259; that stretch reads GTSIG. The active-site Nucleophile is serine 1257. The active-site Proton acceptor is the aspartate 1375. Positions 1375–1377 match the DGA/G motif; it reads DGG. The disordered stretch occupies residues 1504–1527; that stretch reads LPLPEENEEKKKLQRTLAPRRASI.

It belongs to the NTE family.

The protein resides in the endoplasmic reticulum membrane. It carries out the reaction a 1-acyl-sn-glycero-3-phosphocholine + H2O = sn-glycerol 3-phosphocholine + a fatty acid + H(+). With respect to regulation, inhibited by organophosphorus esters. In terms of biological role, intracellular phospholipase B that catalyzes the double deacylation of phosphatidylcholine (PC) to glycerophosphocholine (GroPCho). Plays an important role in membrane lipid homeostasis. Responsible for the rapid PC turnover in response to inositol, elevated temperatures, or when choline is present in the growth medium. This is Lysophospholipase nte1 (nte1) from Emericella nidulans (strain FGSC A4 / ATCC 38163 / CBS 112.46 / NRRL 194 / M139) (Aspergillus nidulans).